A 314-amino-acid chain; its full sequence is Olfactory receptor 51I1 (314 aa).

Residues 1 to 27 (MLGLNGTPFQPATLQLTGIPGIQTGLT) are Extracellular-facing. The helical transmembrane segment at 28 to 48 (WVALIFCILYMISIVGNLSIL) threads the bilayer. Residues 49 to 56 (TLVFWEPA) are Cytoplasmic-facing. The helical transmembrane segment at 57–77 (LHQPMYYFLSMLALNDLGVSF) threads the bilayer. The Extracellular segment spans residues 78 to 101 (STLPTVISTFCFNYNHVAFNACLV). A disulfide bridge links Cys99 with Cys191. A helical transmembrane segment spans residues 102–122 (QMFFIHTFSFMESGILLAMSL). At 123–141 (DRFVAICYPLRYVTVLTHN) the chain is on the cytoplasmic side. A helical transmembrane segment spans residues 142–162 (RILAMGLGILTKSFTTLFPFP). Topologically, residues 163–198 (FVVKRLPFCKGNVLHHSYCLHPDLMKVACGDIHVNN) are extracellular. The helical transmembrane segment at 199-219 (IYGLLVIIFTYGMDSTFILLS) threads the bilayer. The Cytoplasmic portion of the chain corresponds to 220-239 (YALILRAMLVIISQEQRLKA). A helical transmembrane segment spans residues 240 to 260 (LNTCMSHICAVLAFYVPIIAV). The Extracellular segment spans residues 261-275 (SMIHRFWKSAPPVVH). The helical transmembrane segment at 276 to 296 (VMMSNVYLFVPPMLNPIIYSV) threads the bilayer. The Cytoplasmic portion of the chain corresponds to 297–314 (KTKEIRKGILKFFHKSQA).

It belongs to the G-protein coupled receptor 1 family.

The protein localises to the cell membrane. Odorant receptor. The chain is Olfactory receptor 51I1 (OR51I1) from Homo sapiens (Human).